Consider the following 96-residue polypeptide: Transcriptional regulator ATRY (96 aa).

The GATA-type; atypical zinc-finger motif lies at 1–12 (VICTACGQQVNQ). Residues 1-96 (VICTACGQQV…IAVCDSVLEN (96 aa)) enclose the ADD domain. The segment at 27–82 (LICKRWCAEGGNLICCDSCHNAFCKKCIWRNLGRKEISKIMNEKNEWHCYICCPEP) adopts a PHD-type; atypical zinc-finger fold.

Belongs to the SNF2/RAD54 helicase family. Expressed in developing and adult testis. Also weakly expressed in prostate and epididymis.

The protein localises to the nucleus. The catalysed reaction is ATP + H2O = ADP + phosphate + H(+). Could be a global transcriptional regulator. Modifies gene expression by affecting chromatin. The sequence is that of Transcriptional regulator ATRY (ATRY) from Notamacropus eugenii (Tammar wallaby).